A 322-amino-acid polypeptide reads, in one-letter code: Tetrahydromethanopterin S-methyltransferase subunit H (322 aa).

The protein belongs to the MtrH family. In terms of assembly, the complex is composed of 8 subunits; MtrA, MtrB, MtrC, MtrD, MtrE, MtrF, MtrG and MtrH.

It carries out the reaction 5-methyl-5,6,7,8-tetrahydromethanopterin + coenzyme M + 2 Na(+)(in) = 5,6,7,8-tetrahydromethanopterin + methyl-coenzyme M + 2 Na(+)(out). It participates in one-carbon metabolism; methanogenesis from CO(2); methyl-coenzyme M from 5,10-methylene-5,6,7,8-tetrahydromethanopterin: step 2/2. Functionally, part of a complex that catalyzes the formation of methyl-coenzyme M and tetrahydromethanopterin from coenzyme M and methyl-tetrahydromethanopterin. This is an energy-conserving, sodium-ion translocating step. MtrH catalyzes the transfer of the methyl group from methyl-tetrahydromethanopterin to the corrinoid prosthetic group of MtrA. This Methanopyrus kandleri (strain AV19 / DSM 6324 / JCM 9639 / NBRC 100938) protein is Tetrahydromethanopterin S-methyltransferase subunit H.